A 381-amino-acid polypeptide reads, in one-letter code: MSDDSHLETKVVTDGTTGEKKTISYEPCRVLGSGSFGVVIQAKLVGTPGFIAVKRVLQDKRYKNRELQIMRAISHPNIIKLIAFFHTHNPSKDETHLCLLLEYMPETVFDDMRWYTRRRKSIPNLSIKLYAFQLFRALAYLHSTGVCHRDIKPQNLLVDYKTGILKLCDFGSAKVLVPSEPNVSYICSRYYRAPELVFGATHYTTKIDVWSAACVIAELFIGRPLFPGDSSVEQLVEIIRVLGTPSYHEISVMNPNYVNHSLPNVRPHTLESVMPHNCTKNAMDLLHKMLTYVPSKRISAIEVLTHPFFDELRDPNCMYHCSRDEGTIERHLPPLFNFNLAELSIRPNLNKAILPPHVYESLDVDINNFEPIVVKQADADS.

Positions 25–309 (YEPCRVLGSG…AIEVLTHPFF (285 aa)) constitute a Protein kinase domain. ATP contacts are provided by residues 31–39 (LGSGSFGVV) and Lys-54. The active-site Proton acceptor is the Asp-150. The residue at position 184 (Ser-184) is a Phosphoserine. Tyr-185 carries the post-translational modification Phosphotyrosine.

The protein belongs to the protein kinase superfamily. CMGC Ser/Thr protein kinase family. GSK-3 subfamily.

The enzyme catalyses L-seryl-[protein] + ATP = O-phospho-L-seryl-[protein] + ADP + H(+). The catalysed reaction is L-threonyl-[protein] + ATP = O-phospho-L-threonyl-[protein] + ADP + H(+). In Schizosaccharomyces pombe (strain 972 / ATCC 24843) (Fission yeast), this protein is Protein kinase gsk31 (gsk31).